We begin with the raw amino-acid sequence, 203 residues long: Recombination protein RecR (203 aa).

Residues 56-71 (CEVCGNVSDADRCRIC) form a C4-type zinc finger. Residues 79–179 (SLVCVVEEPK…TVTRIASGLP (101 aa)) enclose the Toprim domain.

It belongs to the RecR family.

In terms of biological role, may play a role in DNA repair. It seems to be involved in an RecBC-independent recombinational process of DNA repair. It may act with RecF and RecO. The protein is Recombination protein RecR of Mycobacterium sp. (strain JLS).